The primary structure comprises 261 residues: MIADLIQRPLLTYTLLLPRFMACFVILPVLSKQLLGGVLLRNGIVCSLALYVYPAVANQPYIEVDAFTLMLLIGKEIILGLLIGFVATIPFWALESAGFIVDNQRGAAMASLLNPGLDSQTSPTGLLLTQTLITIFFSGGAFLSLLSALFHSYVNWPVASFFPAVSEQWVDFFYNQFSQILLIAAVLAAPLLIAMFLAEFGLALISRFAPSLNVFVLAMPIKSAIASLLLVIYCMQMMSHASKAMLLVMDPISLLIPVLEK.

Transmembrane regions (helical) follow at residues 20–40 (FMAC…GVLL), 44–64 (IVCS…YIEV), 77–97 (IILG…LESA), 131–151 (TLIT…ALFH), 180–200 (ILLI…LAEF), 214–234 (VFVL…VIYC), and 239–259 (SHAS…IPVL).

This sequence belongs to the FliR/MopE/SpaR family.

The protein localises to the cell membrane. Component of the yop secretion machinery. The protein is Yop proteins translocation protein T (yscT) of Yersinia pestis.